The sequence spans 285 residues: Small ribosomal subunit protein mS23 (285 aa).

It belongs to the mitochondrion-specific ribosomal protein mS23 family. Component of the mitochondrial small ribosomal subunit.

It localises to the mitochondrion. The chain is Small ribosomal subunit protein mS23 (RSM25) from Debaryomyces hansenii (strain ATCC 36239 / CBS 767 / BCRC 21394 / JCM 1990 / NBRC 0083 / IGC 2968) (Yeast).